A 987-amino-acid chain; its full sequence is Pro-apoptotic serine protease NMA111 (987 aa).

The tract at residues 1-29 is disordered; that stretch reads MPDIPTKRRLSNGSVIDNTNKRQMQSSFV. Positions 11–28 are enriched in polar residues; sequence SNGSVIDNTNKRQMQSSF. Residues 69 to 262 form a serine protease region; sequence VKSVVSIQFT…LPVYRPLRAL (194 aa). Active-site charge relay system residues include H110, D141, and S224. 2 PDZ domains span residues 279 to 364 and 878 to 950; these read EWSL…VVIQ and PHHG…VSFD.

This sequence belongs to the peptidase S1C family.

It is found in the nucleus. In terms of biological role, nuclear serine protease which mediates apoptosis. This chain is Pro-apoptotic serine protease NMA111 (NMA111), found in Debaryomyces hansenii (strain ATCC 36239 / CBS 767 / BCRC 21394 / JCM 1990 / NBRC 0083 / IGC 2968) (Yeast).